The following is a 160-amino-acid chain: NAD(P)H-quinone oxidoreductase subunit I, chloroplastic (160 aa).

4Fe-4S ferredoxin-type domains are found at residues 55–84 (GRIHFEFDKCIACEVCVRVCPIDLPVVDWK) and 95–124 (LNYSIDFGICIFCGNCVEYCPTNCLSMTEE). Positions 64, 67, 70, 74, 104, 107, 110, and 114 each coordinate [4Fe-4S] cluster.

The protein belongs to the complex I 23 kDa subunit family. In terms of assembly, NDH is composed of at least 16 different subunits, 5 of which are encoded in the nucleus. [4Fe-4S] cluster serves as cofactor.

The protein localises to the plastid. It localises to the chloroplast thylakoid membrane. The enzyme catalyses a plastoquinone + NADH + (n+1) H(+)(in) = a plastoquinol + NAD(+) + n H(+)(out). The catalysed reaction is a plastoquinone + NADPH + (n+1) H(+)(in) = a plastoquinol + NADP(+) + n H(+)(out). Its function is as follows. NDH shuttles electrons from NAD(P)H:plastoquinone, via FMN and iron-sulfur (Fe-S) centers, to quinones in the photosynthetic chain and possibly in a chloroplast respiratory chain. The immediate electron acceptor for the enzyme in this species is believed to be plastoquinone. Couples the redox reaction to proton translocation, and thus conserves the redox energy in a proton gradient. This is NAD(P)H-quinone oxidoreductase subunit I, chloroplastic from Cucumis sativus (Cucumber).